We begin with the raw amino-acid sequence, 398 residues long: 8-amino-7-oxononanoate synthase (398 aa).

Arg-23 serves as a coordination point for substrate. 110–111 serves as a coordination point for pyridoxal 5'-phosphate; sequence GY. His-135 contacts substrate. Ser-181, His-209, and Thr-237 together coordinate pyridoxal 5'-phosphate. Lys-240 carries the N6-(pyridoxal phosphate)lysine modification. Thr-354 serves as a coordination point for substrate.

This sequence belongs to the class-II pyridoxal-phosphate-dependent aminotransferase family. BioF subfamily. Homodimer. Requires pyridoxal 5'-phosphate as cofactor.

It carries out the reaction 6-carboxyhexanoyl-[ACP] + L-alanine + H(+) = (8S)-8-amino-7-oxononanoate + holo-[ACP] + CO2. Its pathway is cofactor biosynthesis; biotin biosynthesis. Functionally, catalyzes the decarboxylative condensation of pimeloyl-[acyl-carrier protein] and L-alanine to produce 8-amino-7-oxononanoate (AON), [acyl-carrier protein], and carbon dioxide. The polypeptide is 8-amino-7-oxononanoate synthase (Anaeromyxobacter dehalogenans (strain 2CP-1 / ATCC BAA-258)).